A 239-amino-acid chain; its full sequence is Probable plastid-lipid-associated protein 8, chloroplastic (239 aa).

The N-terminal 52 residues, 1–52 (MAATASSLTIASSFSEPRTQIHSSRRLNLPLQYSIPYKVLRSRSRRLGLVVS), are a transit peptide targeting the chloroplast. Ser-53 is subject to N-acetylserine.

The protein belongs to the PAP/fibrillin family.

It is found in the plastid. Its subcellular location is the chloroplast. The protein is Probable plastid-lipid-associated protein 8, chloroplastic (PAP8) of Arabidopsis thaliana (Mouse-ear cress).